A 306-amino-acid chain; its full sequence is OVARIAN TUMOR DOMAIN-containing deubiquitinating enzyme 1 (306 aa).

The OTU domain occupies 81-295 (IGIRRTRGDG…PGHYDILYPK (215 aa)). Residue D89 is part of the active site. C92 serves as the catalytic Nucleophile. Catalysis depends on residues H259 and H288.

It belongs to the peptidase C65 family.

It catalyses the reaction Thiol-dependent hydrolysis of ester, thioester, amide, peptide and isopeptide bonds formed by the C-terminal Gly of ubiquitin (a 76-residue protein attached to proteins as an intracellular targeting signal).. Its activity is regulated as follows. Cleavage activities for 'Lys-48'- and 'Lys-63'-linked ubiquitin (UB) tetramers is inhibited by UB aldehyde and N-ethylmaleimide but not by the metalloprotease inhibitors 1,10-phenanthroline and EDTA, and the serine protease inhibitor phenylmethylsulfonyl fluoride. In terms of biological role, hydrolase that can remove conjugated ubiquitin from proteins in vitro and may therefore play an important regulatory role at the level of protein turnover by preventing degradation. Cysteine protease with a preference for Met-1 and 'Lys-48' over 'Lys-63'-linked ubiquitin (UB) tetramers (e.g. Ub2, Ub3 and Ub4) as substrates. This chain is OVARIAN TUMOR DOMAIN-containing deubiquitinating enzyme 1, found in Arabidopsis thaliana (Mouse-ear cress).